Reading from the N-terminus, the 994-residue chain is Tyrosine-protein kinase Mer (994 aa).

An N-terminal signal peptide occupies residues 1-18 (MVLAPLLLGLLLLPALWS). The Extracellular segment spans residues 19–497 (GGTAEKWEET…TPAPGNTDSM (479 aa)). Residues 44–78 (VNHRPFSAPHSSRDQLPPPQTGRSHPAHTAAPQVT) are disordered. 2 Ig-like C2-type domains span residues 75 to 181 (PQVT…EIVS) and 192 to 268 (PYFI…LTVS). Asn-91, Asn-108, Asn-165, Asn-202, Asn-210, Asn-229, Asn-289, Asn-311, Asn-324, Asn-331, Asn-349, Asn-384, Asn-390, Asn-437, and Asn-449 each carry an N-linked (GlcNAc...) asparagine glycan. Cysteines 109 and 170 form a disulfide. Cys-213 and Cys-257 are joined by a disulfide. 2 Fibronectin type-III domains span residues 281-376 (PPTE…TTEG) and 381-478 (APLN…IPEH). A helical transmembrane segment spans residues 498–518 (FIILGCFCGFILIGLILCISL). Topologically, residues 519-994 (ALRRRVQETK…DSLEDSEVLM (476 aa)) are cytoplasmic. Residue Ser-538 is modified to Phosphoserine. Positions 582-852 (LVLGKVLGEG…SVLRLQLEKL (271 aa)) constitute a Protein kinase domain. ATP contacts are provided by residues 588–596 (LGEGEFGSV) and Lys-610. The active-site Proton acceptor is the Asp-718. Residues Tyr-744, Tyr-748, Tyr-749, and Tyr-867 each carry the phosphotyrosine; by autocatalysis modification.

The protein belongs to the protein kinase superfamily. Tyr protein kinase family. AXL/UFO subfamily. As to quaternary structure, interacts (upon activation) with TNK2; stimulates TNK2 autophosphorylation. Interacts (via N-terminus) with extracellular ligands LGALS3, TUB, TULP1 and GAS6. Interacts with VAV1 in a phosphotyrosine-independent manner. Interacts with TIMD4; this interaction enhances TIMD4-mediated efferocytosis. Post-translationally, autophosphorylated on Tyr-744, Tyr-748 and Tyr-749 in the activation loop allowing full activity. Autophosphorylated on Tyr-867 leading to recruitment of downstream partners of the signaling cascade such as PLCG2. As to expression, expressed predominantly in the hematopoietic lineages: macrophages, NK cells, NKT cells, dendritic cells and platelets.

It localises to the cell membrane. The catalysed reaction is L-tyrosyl-[protein] + ATP = O-phospho-L-tyrosyl-[protein] + ADP + H(+). Receptor tyrosine kinase that transduces signals from the extracellular matrix into the cytoplasm by binding to several ligands including LGALS3, TUB, TULP1 or GAS6. Regulates many physiological processes including cell survival, migration, differentiation, and phagocytosis of apoptotic cells (efferocytosis). Ligand binding at the cell surface induces autophosphorylation of MERTK on its intracellular domain that provides docking sites for downstream signaling molecules. Following activation by ligand, interacts with GRB2 or PLCG2 and induces phosphorylation of MAPK1, MAPK2, FAK/PTK2 or RAC1. MERTK signaling plays a role in various processes such as macrophage clearance of apoptotic cells, platelet aggregation, cytoskeleton reorganization and engulfment. Functions in the retinal pigment epithelium (RPE) as a regulator of rod outer segments fragments phagocytosis. Also plays an important role in inhibition of Toll-like receptors (TLRs)-mediated innate immune response by activating STAT1, which selectively induces production of suppressors of cytokine signaling SOCS1 and SOCS3. This chain is Tyrosine-protein kinase Mer (Mertk), found in Mus musculus (Mouse).